A 251-amino-acid chain; its full sequence is 16S rRNA (guanine(1405)-N(7))-methyltransferase (251 aa).

Residues Tyr56, 81-83 (HAS), Arg87, Ala111, Asp131, 157-158 (DV), Phe173, and Glu182 each bind S-adenosyl-L-methionine.

This sequence belongs to the methyltransferase superfamily. Aminoglycoside resistance family.

It carries out the reaction guanosine(1405) in 16S rRNA + S-adenosyl-L-methionine = N(7)-methylguanosine(1405) in 16S rRNA + S-adenosyl-L-homocysteine. Specifically methylates the N(7) position of guanine 1405 in 16S rRNA. Confers resistance to various aminoglycosides, including kanamycin, tobramycin, amikacin, arbekacin, gentamicin, sisomicin and isepamicin. The polypeptide is 16S rRNA (guanine(1405)-N(7))-methyltransferase (rmtB) (Serratia marcescens).